Here is a 125-residue protein sequence, read N- to C-terminus: Small ribosomal subunit protein bS6 (125 aa).

The disordered stretch occupies residues 99–125 (ASPMVKAREERKPLTEVENNDFEDAEE). The span at 104–113 (KAREERKPLT) shows a compositional bias: basic and acidic residues. Residues 116–125 (ENNDFEDAEE) are compositionally biased toward acidic residues.

It belongs to the bacterial ribosomal protein bS6 family.

Its function is as follows. Binds together with bS18 to 16S ribosomal RNA. The chain is Small ribosomal subunit protein bS6 from Histophilus somni (strain 2336) (Haemophilus somnus).